The primary structure comprises 176 residues: Oxaleimides biosynthesis cluster protein N (176 aa).

4 helical membrane-spanning segments follow: residues 5–25 (LLVV…PLIT), 71–91 (VWTG…LNLF), 104–124 (FLYG…PKML), and 155–175 (FWIV…EGLK).

The protein localises to the membrane. It functions in the pathway secondary metabolite biosynthesis. Part of the gene cluster that mediates the biosynthesis of oxaleimides, cytotoxic compounds containing an unusual disubstituted succinimide moiety. The first step of the pathway is provided by the HR-PKS poxF that serves in a new mode of collaborative biosynthesis with the PKS-NRPS poxE, by providing the olefin containing amino acid substrate via the synthesis of an ACP-bound dec-4-enoate. The cytochrome P450 monooxygenase poxM-catalyzed oxidation at the alpha-position creates the enzyme-bound 2-hydroxydec-4-enoyl-ACP thioester, which may be prone to spontaneous hydrolysis to yield 2-hydroxydec-4-enoic acid due to increased electrophilicity of the carbonyl. 2-hydroxydec-4-enoic acid can then be further oxidized by poxM to yield the alpha-ketoacid 2-oxodec-4-enoicacid, which is reductively aminated by the aminotransferase poxL to yield (S,E)-2-aminodec-4-enoic acid. The Hybrid PKS-NRPS synthetase poxE then performs condensation between the octaketide product of its PKS modules and the amino group of (S,E)-2-aminodec-4-enoic acid which is activated and incorporated by the adenylation domain. The resulting aminoacyl product can be cyclized by the Diels-Alderase PoxQ and reductively released by the reductive (R) domain of poxE to yield an aldehyde intermediate. The released aldehyde is then substrate for a Knoevenagel condensation by the hydrolyase poxO followed by an oxidation at the 5-position of the pyrrolidone ring. The presence of the olefin from the amino acid building block allows for migration of the substituted allyl group to occur. This allylic transposition reaction takes place in a conjugate addition, semipinacol-like fashion to yield a succinimide intermediate. Iterative two-electron oxidations of the C7 methyl of the succinimide intermediate to the carboxylic acid can be catalyzed by one of two remaining cytochrome P450 monooxygenasess poxC or poxD to yield oxaleimide A. Subsequent oxidation yields the maleimide scaffold oxaleimide I. Both oxaleimide A and oxaleimide I can undergo oxidative modifications in the decalin ring to yield the series of products oxaleimides B to H. The sequence is that of Oxaleimides biosynthesis cluster protein N from Penicillium oxalicum (strain 114-2 / CGMCC 5302) (Penicillium decumbens).